Consider the following 95-residue polypeptide: Large ribosomal subunit protein uL23 (95 aa).

This sequence belongs to the universal ribosomal protein uL23 family. As to quaternary structure, part of the 50S ribosomal subunit. Contacts protein L29, and trigger factor when it is bound to the ribosome.

Functionally, one of the early assembly proteins it binds 23S rRNA. One of the proteins that surrounds the polypeptide exit tunnel on the outside of the ribosome. Forms the main docking site for trigger factor binding to the ribosome. The sequence is that of Large ribosomal subunit protein uL23 from Geobacillus kaustophilus (strain HTA426).